The sequence spans 1452 residues: Pleiotropic drug resistance protein 1 (1452 aa).

One can recognise an ABC transporter 1 domain in the interval 152–425 (LNYLHILPNR…FEYMGFICPE (274 aa)). 185 to 192 (GPPSSGKT) contributes to the ATP binding site. In terms of domain architecture, ABC transmembrane type-2 1 spans 504–716 (LLKACTAREY…AQNAIAVNEF (213 aa)). The next 7 helical transmembrane spans lie at 521 to 541 (FVYI…MTLF), 554 to 574 (GAVF…NGFS), 609 to 629 (IPIT…VIGF), 640 to 660 (LLLL…MGAL), 664 to 684 (IIVA…MGGF), 694 to 714 (WWIW…IAVN), and 753 to 773 (IGAG…AVAL). The disordered stretch occupies residues 808–830 (LGKSSSEKGNDVRRSASSRSMSS). Over residues 812–821 (SSEKGNDVRR) the composition is skewed to basic and acidic residues. An ABC transporter 2 domain is found at 855 to 1107 (ITFDDIRYAV…HLIKYFEGID (253 aa)). 900 to 907 (GVSGAGKT) serves as a coordination point for ATP. The region spanning 1180-1394 (TQCMACFWKQ…TLYGLIASQF (215 aa)) is the ABC transmembrane type-2 2 domain. Helical transmembrane passes span 1199–1219 (YTAV…TIFW), 1239–1259 (YIAV…VIAI), 1287–1307 (LPYL…MIGF), 1314–1334 (FFWY…YGMM), 1344–1364 (IAAI…GFIV), 1375–1395 (WYYY…SQFG), and 1421–1441 (FVGY…FIFA).

This sequence belongs to the ABC transporter superfamily. ABCG family. PDR (TC 3.A.1.205) subfamily. In terms of tissue distribution, expressed in root hypodermal passage cells. Expressed in stem tissues, particularly the vasculature and nodes adjacent to leaf axils.

The protein localises to the cell membrane. Its function is as follows. Cellular strigolactone (SL) transporter required for the exudation of SL from the root to the soil. The presence of SL in the vicinity of the roots is required for development of symbiotic interactions with arbuscular mycorrhizal fungi (AMF). Transports SL in the above ground tissues and is required for the control of shoot branching. SL regulates plant shoot architecture by inhibiting the outgrowth of axillary buds. Involved in the regulation of shootward and outward directional strigolactone transport in roots. Due to its polar localization in root cells, mediates directional shootward strigolactone transport, as well as localized outward directional transport for exudation to the soil. The sequence is that of Pleiotropic drug resistance protein 1 from Petunia axillaris (Large white petunia).